Here is a 404-residue protein sequence, read N- to C-terminus: Cysteine desulfurase IscS (404 aa).

Residues 75-76 (AT), N155, Q183, and 203-205 (SAH) each bind pyridoxal 5'-phosphate. Residue K206 is modified to N6-(pyridoxal phosphate)lysine. T243 contributes to the pyridoxal 5'-phosphate binding site. C328 (cysteine persulfide intermediate) is an active-site residue. C328 serves as a coordination point for [2Fe-2S] cluster.

Belongs to the class-V pyridoxal-phosphate-dependent aminotransferase family. NifS/IscS subfamily. In terms of assembly, homodimer. Forms a heterotetramer with IscU, interacts with other sulfur acceptors. The cofactor is pyridoxal 5'-phosphate.

Its subcellular location is the cytoplasm. The enzyme catalyses (sulfur carrier)-H + L-cysteine = (sulfur carrier)-SH + L-alanine. The protein operates within cofactor biosynthesis; iron-sulfur cluster biosynthesis. Its function is as follows. Master enzyme that delivers sulfur to a number of partners involved in Fe-S cluster assembly, tRNA modification or cofactor biosynthesis. Catalyzes the removal of elemental sulfur atoms from cysteine to produce alanine. Functions as a sulfur delivery protein for Fe-S cluster synthesis onto IscU, an Fe-S scaffold assembly protein, as well as other S acceptor proteins. In Pseudomonas syringae pv. tomato (strain ATCC BAA-871 / DC3000), this protein is Cysteine desulfurase IscS.